A 289-amino-acid chain; its full sequence is Cell division protein ZipA (289 aa).

Residue M1 is a topological domain, periplasmic. A helical membrane pass occupies residues 2 to 22 (DIGLREWLIVIGLIVIAGILF). Over 23-289 (DGWRRMRGGK…HERRSLMQKR (267 aa)) the chain is Cytoplasmic. A disordered region spans residues 66 to 141 (REPSFDEQDL…KEREKAPAVA (76 aa)). Residues 81-99 (REAKERKGGKRQEEPRQGD) show a composition bias toward basic and acidic residues. The span at 100–114 (LDLDEGLALEADPSD) shows a compositional bias: acidic residues.

It belongs to the ZipA family. As to quaternary structure, interacts with FtsZ via their C-terminal domains.

It localises to the cell inner membrane. In terms of biological role, essential cell division protein that stabilizes the FtsZ protofilaments by cross-linking them and that serves as a cytoplasmic membrane anchor for the Z ring. Also required for the recruitment to the septal ring of downstream cell division proteins. The polypeptide is Cell division protein ZipA (Pseudomonas aeruginosa (strain LESB58)).